The sequence spans 267 residues: MKKILLTNDDGYHAKGIKALEQALEKMAEIYVVAPKHEKSACSQCITITAPLRAEKIKGKEGRHYKIDDGTPSDCVYLAINELFKHVCFDLVISGINLGSNMGEDTIYSGTVAGAIEGTIQGVPSIAISQILSHRNKNTPLSFDLAQKIIQDLVQNIFTNGYPLKGRKLLNVNVPNCSLQEYKGECITPKGYRLYKKEVHKRTDPKNESYFWLGLHPLEWQKRENEDRLSDFDAIASNHVSITPLNLDLTSYDDLKNLESWHKGMLK.

A divalent metal cation-binding residues include D9, D10, S40, and N97.

The protein belongs to the SurE nucleotidase family. A divalent metal cation is required as a cofactor.

It localises to the cytoplasm. The catalysed reaction is a ribonucleoside 5'-phosphate + H2O = a ribonucleoside + phosphate. Its function is as follows. Nucleotidase that shows phosphatase activity on nucleoside 5'-monophosphates. In Helicobacter pylori (strain Shi470), this protein is 5'-nucleotidase SurE.